The sequence spans 149 residues: Putative glycine cleavage system H protein 3 (149 aa).

The region spanning 39–121 is the Lipoyl-binding domain; that stretch reads TCTLGITKYA…EDKGWLIKME (83 aa). Lys-80 carries the post-translational modification N6-lipoyllysine.

Belongs to the GcvH family. As to quaternary structure, the glycine cleavage system is composed of four proteins: P, T, L and H. (R)-lipoate is required as a cofactor.

In terms of biological role, the glycine cleavage system catalyzes the degradation of glycine. The H protein shuttles the methylamine group of glycine from the P protein to the T protein. The sequence is that of Putative glycine cleavage system H protein 3 (gcvH3) from Dictyostelium discoideum (Social amoeba).